The primary structure comprises 156 residues: MPRKGSVPKRDVLPDPIHNSKLVTKLINKIMLDGKRGTAQRILYSAFDLVEQRSGRDALEVFEEAINNIMPVLEVKARRVGGSNYQVPVEVRPERRTTLGLRWLVNYARLRGEKTMEDRLANEILDAANNTGGAVKKREDTHKMAEANKAFAHYRW.

The protein belongs to the universal ribosomal protein uS7 family. Part of the 30S ribosomal subunit. Contacts proteins S9 and S11.

In terms of biological role, one of the primary rRNA binding proteins, it binds directly to 16S rRNA where it nucleates assembly of the head domain of the 30S subunit. Is located at the subunit interface close to the decoding center, probably blocks exit of the E-site tRNA. The chain is Small ribosomal subunit protein uS7 from Staphylococcus aureus (strain USA300).